Consider the following 50-residue polypeptide: Nosiheptide precursor (50 aa).

The thiazole-4-carboxylic acid (Ser-Cys) cross-link spans 38–39 (SC). The segment at residues 38–46 (SCTTCECCC) is a cross-link (3-hydroxypyridine-2,5-dicarboxylic acid (Ser-Cys) (with S-47)). Residues 38–47 (SCTTCECCCS) constitute a cross-link (3-hydroxypyridine-2,5-dicarboxylic acid (Ser-Ser) (with C-46)). A cross-link (thiazole-4-carboxylic acid (Thr-Cys)) is located at residues 41–42 (TC). Glutamate 43 is modified (4-hydroxyglutamate). The segment at residues 43 to 44 (EC) is a cross-link (thiazole-4-carboxylic acid (Glu-Cys)). Residues 43–45 (ECC) constitute a cross-link (2-(cystein-S-ylcarbonyl)-3-methyl-4-(glutam-5-yloxy)methylindole (Glu-Cys)). Positions 45-46 (CC) form a cross-link, thiazole-4-carboxylic acid (Cys-Cys). The thiazole-4-carboxylic acid (Ser-Cys) cross-link spans 47–48 (SC). Residue serine 49 is modified to 2,3-didehydroalanine (Ser). Serine 49 carries the post-translational modification Serine amide; atypical.

It belongs to the thiocillin family. Post-translationally, the amidation of Ser-49 is produced by the oxidative cleavage of Ser-50 rather than of a glycine, as in eukaryotes.

Its function is as follows. Inhibits bacterial protein biosynthesis by binding to ribosomes. Specifically, binds to the complex of 23S rRNA and ribosomal protein L11 (RPLK) in the 50S ribosomal subunit. While allowing a weak binding of elongation factor G (EF-G) to the ribosome and subsequent GTP-hydrolysis, probably impairs conformational changes in both the ribosome and EF-G which are necessary for translocation. In vitro, inhibits Gram-positive bacteria S.aureus strain 209P (MIC=0.0009 ug/ml), S.aureus strain 133 (MIC=0.0019 ug/ml), S.aureus strain B3 (MIC=0.003 ug/ml), S.aureus strain Hb (MIC=0.003 ug/ml), M.citreus strain ATCC 8411 (MIC=0.0038 ug/ml), M.lysodeikticus strain ATCC 4698 (MIC=0.003 ug/ml), S.lutea strain ATCC 9341 (MIC=0.0011 ug/ml), S.faecalis strain ATCC 9790 (MIC=0.0007 ug/ml), S.viridans (MIC=0.0065 ug/ml), S.pyogenes hemolyticus strain Dig7 (MIC=0.00028 ug/ml), D.pneumoniae strain Til (MIC=0.00015 ug/ml), N.catrrhalis (MIC=0.0017 ug/ml), L.casei strain ATCC 6633 (MIC=0.003 ug/ml), B.cereus strain ATCC 6630 (MIC=0.0071 ug/ml) and various isolates of L.monocytogenes. In vitro, inhibits Gram-negative bacterium P.multocida strain A125 (MIC=0.0024 ug/ml) but not M.smegmatis strain ATCC 6630, S.typhimurium, A.aerogenes strain ATCC 8308, P.vulgaris, K.pneumoniae strain ATCC 10031, S.marcescens strain A476, P.aeruginosa strain Bass or B.bronchiseptica strain CN387. Does not inhibit Gram-negative bacterium E.coli strain ATCC 9637 but does inhibit purified ribosomes from E.coli. In vivo, has no systemic effect in mice infected with staphylococci or streptococci when applied orally or subcutaneously. Has a local effect in mice infected subcutaneously or intraperitoneally with staphylococci when applied immediately afterwards. Is not toxic to mice. The chain is Nosiheptide precursor from Streptomyces actuosus.